The following is a 262-amino-acid chain: MNKFLIIDGLNLVRRIYAAIPDENDMESLKERVTSACTKLLRVHHPSHIAIVWDGDEISWRKQLYPDYKKGRKPMPEPLAQGLRALQEHLATLNIASIYAAAEADDVIATLAVKTAKAQGEAIIVSTDKGFSQLNHPRITQWDHFNQQYLDIAALEQKLGVDRSQFLDLMALAGDSGNKIPGIAGIGPKSAAELLKTFRTLSTLFSSLPNLGAKQAKKLAEGKEMARLSYKLAQLQTDLPLNINLKDFRANSTPHPAPNIEQ.

A Mg(2+)-binding site is contributed by Asp-105. The 5'-3' exonuclease domain occupies 164–251 (SQFLDLMALA…NINLKDFRAN (88 aa)). Residues Leu-172, Ala-173, Pro-181, Ile-183, and Ile-186 each coordinate K(+). The interaction with DNA stretch occupies residues 185–190 (GIGPKS).

It belongs to the Xni family. The cofactor is Mg(2+). Requires K(+) as cofactor.

In terms of biological role, has flap endonuclease activity. During DNA replication, flap endonucleases cleave the 5'-overhanging flap structure that is generated by displacement synthesis when DNA polymerase encounters the 5'-end of a downstream Okazaki fragment. The protein is Flap endonuclease Xni of Shewanella putrefaciens (strain CN-32 / ATCC BAA-453).